Reading from the N-terminus, the 142-residue chain is Large ribosomal subunit protein uL13 (142 aa).

Belongs to the universal ribosomal protein uL13 family. Part of the 50S ribosomal subunit.

In terms of biological role, this protein is one of the early assembly proteins of the 50S ribosomal subunit, although it is not seen to bind rRNA by itself. It is important during the early stages of 50S assembly. In Pseudomonas syringae pv. syringae (strain B728a), this protein is Large ribosomal subunit protein uL13.